Here is a 266-residue protein sequence, read N- to C-terminus: Proteasome subunit beta type-7 (266 aa).

A propeptide spans methionine 1–glycine 34 (removed in mature form). Residue threonine 35 is the Nucleophile of the active site.

It belongs to the peptidase T1B family. As to quaternary structure, the 26S proteasome consists of a 20S proteasome core and two 19S regulatory subunits. The 20S proteasome core is composed of 28 subunits that are arranged in four stacked rings, resulting in a barrel-shaped structure. The two end rings are each formed by seven alpha subunits, and the two central rings are each formed by seven beta subunits. The catalytic chamber with the active sites is on the inside of the barrel.

The protein localises to the cytoplasm. It localises to the nucleus. It catalyses the reaction Cleavage of peptide bonds with very broad specificity.. In terms of biological role, the proteasome is a multicatalytic proteinase complex which is characterized by its ability to cleave peptides with Arg, Phe, Tyr, Leu, and Glu adjacent to the leaving group at neutral or slightly basic pH. The proteasome has an ATP-dependent proteolytic activity. The polypeptide is Proteasome subunit beta type-7 (psmB7) (Dictyostelium discoideum (Social amoeba)).